We begin with the raw amino-acid sequence, 430 residues long: 2-deoxy-scyllo-inosose synthase (430 aa).

NAD(+)-binding positions include D42, 73 to 76 (EVHK), 105 to 109 (GVTGN), 129 to 130 (TT), 140 to 142 (SLK), and 151 to 152 (KN). K142 is an active-site residue. E184 is a Co(2+) binding site. E244 is a catalytic residue. Co(2+) is bound by residues H247 and H263. The disordered stretch occupies residues 371–430 (RGGAGGGAAEPAAARTGPVPDGPEAAVPATPGPVPAGPAAAAPLPSGPAPTAPAAAGPVP). Positions 379–399 (AEPAAARTGPVPDGPEAAVPA) are enriched in low complexity.

The protein belongs to the sugar phosphate cyclases superfamily. DOI synthase family. Requires NAD(+) as cofactor. The cofactor is Co(2+).

The catalysed reaction is D-glucose 6-phosphate = 2-deoxy-L-scyllo-inosose + phosphate. Its pathway is metabolic intermediate biosynthesis; 2-deoxystreptamine biosynthesis; 2-deoxystreptamine from D-glucose 6-phosphate: step 1/4. It functions in the pathway antibiotic biosynthesis; neomycin biosynthesis. Its function is as follows. Catalyzes the intramolecular carbocycle formation from D-glucose-6-phosphate to 2-deoxy-scyllo-inosose (DOI). The polypeptide is 2-deoxy-scyllo-inosose synthase (neoC) (Streptomyces fradiae (Streptomyces roseoflavus)).